Reading from the N-terminus, the 235-residue chain is Putative N-acetylmannosamine-6-phosphate 2-epimerase (235 aa).

Belongs to the NanE family.

It carries out the reaction an N-acyl-D-glucosamine 6-phosphate = an N-acyl-D-mannosamine 6-phosphate. It participates in amino-sugar metabolism; N-acetylneuraminate degradation; D-fructose 6-phosphate from N-acetylneuraminate: step 3/5. Functionally, converts N-acetylmannosamine-6-phosphate (ManNAc-6-P) to N-acetylglucosamine-6-phosphate (GlcNAc-6-P). The protein is Putative N-acetylmannosamine-6-phosphate 2-epimerase of Photobacterium profundum (strain SS9).